A 606-amino-acid chain; its full sequence is Probable potassium transport system protein Kup (606 aa).

Transmembrane regions (helical) follow at residues 18–38, 46–66, 97–117, 138–158, 166–186, 212–232, 247–267, 287–307, 339–359, 368–388, 395–415, and 418–438; these read GLVF…VFAL, VFGI…AEYA, LTFV…DGVI, GLHQ…LFVF, VAGA…LSGA, GLAG…GEAL, AWYI…AFII, LYIP…QAMI, IYIG…MLVF, AYGL…ILIL, WKAV…TACL, and LPHG…TILV.

This sequence belongs to the HAK/KUP transporter (TC 2.A.72) family.

Its subcellular location is the cell inner membrane. It carries out the reaction K(+)(in) + H(+)(in) = K(+)(out) + H(+)(out). Its function is as follows. Transport of potassium into the cell. Likely operates as a K(+):H(+) symporter. This chain is Probable potassium transport system protein Kup, found in Trichlorobacter lovleyi (strain ATCC BAA-1151 / DSM 17278 / SZ) (Geobacter lovleyi).